We begin with the raw amino-acid sequence, 475 residues long: MNTALAQQIANEGGVEAWMIAQQHKSLLRFLTCGSVDDGKSTLIGRLLHDTRQIYEDQLSSLHNDSKRHGTQGEKLDLALLVDGLQAEREQGITIDVAYRYFSTEKRKFIIADTPGHEQYTRNMATGASTCELAILLIDARKGVLDQTRRHSFISTLLGIKHLVVAINKMDLVDYSEETFTRIREDYLTFAGQLPGNLDIRFVPLSALEGDNVASQSESMPWYSGPTLLEVLETVEIQRVVDAQPMRFPVQYVNRPNLDFRGYAGTLASGRVEVGQRVKVLPSGVESNVARIVTFDGDREEAFAGEAITLVLTDEIDISRGDLLLAADEALPAVQSASVDVVWMAEQPLSPGQSYDIKIAGKKTRARVDGIRYQVDINNLTQREVENLPLNGIGLVDLTFDEPLVLDRYQQNPVTGGLIFIDRLSNVTVGAGMVHEPVSQATAAPSEFSVFELELNALVRRHFPHWGARDLLGDK.

A tr-type G domain is found at 25 to 239 (KSLLRFLTCG…EVLETVEIQR (215 aa)). A G1 region spans residues 34-41 (GSVDDGKS). 34–41 (GSVDDGKS) lines the GTP pocket. Positions 92-96 (GITID) are G2. The tract at residues 113 to 116 (DTPG) is G3. GTP contacts are provided by residues 113 to 117 (DTPGH) and 168 to 171 (NKMD). Residues 168 to 171 (NKMD) form a G4 region. The segment at 206–208 (SAL) is G5.

This sequence belongs to the TRAFAC class translation factor GTPase superfamily. Classic translation factor GTPase family. CysN/NodQ subfamily. Heterodimer composed of CysD, the smaller subunit, and CysN.

It catalyses the reaction sulfate + ATP + H(+) = adenosine 5'-phosphosulfate + diphosphate. Its pathway is sulfur metabolism; hydrogen sulfide biosynthesis; sulfite from sulfate: step 1/3. With CysD forms the ATP sulfurylase (ATPS) that catalyzes the adenylation of sulfate producing adenosine 5'-phosphosulfate (APS) and diphosphate, the first enzymatic step in sulfur assimilation pathway. APS synthesis involves the formation of a high-energy phosphoric-sulfuric acid anhydride bond driven by GTP hydrolysis by CysN coupled to ATP hydrolysis by CysD. This is Sulfate adenylyltransferase subunit 1 from Escherichia coli O9:H4 (strain HS).